The sequence spans 422 residues: Carboxypeptidase B2 (422 aa).

An N-terminal signal peptide occupies residues 1–21 (MKLYGLGVLVAIILYEKHGLA). Residues 22-113 (FQSGHVLSAL…QTSNDTVSPR (92 aa)) constitute a propeptide, activation peptide. N43, N72, N84, and N107 each carry an N-linked (GlcNAc...) asparagine glycan. In terms of domain architecture, Peptidase M14 spans 121 to 418 (QYHSLNEIYS…AAVSKIAWHV (298 aa)). C177 and C190 are oxidised to a cystine. Zn(2+)-binding residues include H180 and E183. Substrate is bound by residues 180–183 (HARE) and R238. A glycan (N-linked (GlcNAc...) asparagine) is linked at N240. 2 cysteine pairs are disulfide-bonded: C249–C273 and C264–C278. 255–256 (NR) lines the substrate pocket. Residue H309 participates in Zn(2+) binding. 310-311 (SY) contributes to the substrate binding site. An N-linked (GlcNAc...) asparagine glycan is attached at N322. Y362 serves as a coordination point for substrate. Catalysis depends on E384, which acts as the Proton donor/acceptor.

This sequence belongs to the peptidase M14 family. Zn(2+) is required as a cofactor. As to expression, plasma; synthesized in the liver.

Its subcellular location is the secreted. The catalysed reaction is Release of C-terminal Arg and Lys from a polypeptide.. Its activity is regulated as follows. TAFI/CPB2 is unique among carboxypeptidases in that it spontaneously inactivates with a short half-life, a property that is crucial for its role in controlling blood clot lysis. The zymogen is stabilized by interactions with the activation peptide. Release of the activation peptide increases a dynamic flap mobility and in time this leads to conformational changes that disrupt the catalytic site and expose a cryptic thrombin-cleavage site present at Arg-323. Functionally, cleaves C-terminal arginine or lysine residues from biologically active peptides such as kinins or anaphylatoxins in the circulation thereby regulating their activities. Down-regulates fibrinolysis by removing C-terminal lysine residues from fibrin that has already been partially degraded by plasmin. The chain is Carboxypeptidase B2 (Cpb2) from Rattus norvegicus (Rat).